A 482-amino-acid polypeptide reads, in one-letter code: tRNA sulfurtransferase (482 aa).

A THUMP domain is found at 61-165 (LAIRDALTRI…DDRLLLIKGR (105 aa)). ATP contacts are provided by residues 183–184 (LI), lysine 265, glycine 287, and glutamine 296. Cysteine 344 and cysteine 456 are joined by a disulfide. The 79-residue stretch at 404–482 (FGPNDVILDI…GFNNVKVYRP (79 aa)) folds into the Rhodanese domain. Cysteine 456 functions as the Cysteine persulfide intermediate in the catalytic mechanism.

This sequence belongs to the ThiI family.

The protein resides in the cytoplasm. It catalyses the reaction [ThiI sulfur-carrier protein]-S-sulfanyl-L-cysteine + a uridine in tRNA + 2 reduced [2Fe-2S]-[ferredoxin] + ATP + H(+) = [ThiI sulfur-carrier protein]-L-cysteine + a 4-thiouridine in tRNA + 2 oxidized [2Fe-2S]-[ferredoxin] + AMP + diphosphate. It carries out the reaction [ThiS sulfur-carrier protein]-C-terminal Gly-Gly-AMP + S-sulfanyl-L-cysteinyl-[cysteine desulfurase] + AH2 = [ThiS sulfur-carrier protein]-C-terminal-Gly-aminoethanethioate + L-cysteinyl-[cysteine desulfurase] + A + AMP + 2 H(+). Its pathway is cofactor biosynthesis; thiamine diphosphate biosynthesis. Functionally, catalyzes the ATP-dependent transfer of a sulfur to tRNA to produce 4-thiouridine in position 8 of tRNAs, which functions as a near-UV photosensor. Also catalyzes the transfer of sulfur to the sulfur carrier protein ThiS, forming ThiS-thiocarboxylate. This is a step in the synthesis of thiazole, in the thiamine biosynthesis pathway. The sulfur is donated as persulfide by IscS. The protein is tRNA sulfurtransferase of Escherichia coli (strain ATCC 8739 / DSM 1576 / NBRC 3972 / NCIMB 8545 / WDCM 00012 / Crooks).